The following is a 159-amino-acid chain: Transcription elongation factor GreA (159 aa).

It belongs to the GreA/GreB family.

Necessary for efficient RNA polymerase transcription elongation past template-encoded arresting sites. The arresting sites in DNA have the property of trapping a certain fraction of elongating RNA polymerases that pass through, resulting in locked ternary complexes. Cleavage of the nascent transcript by cleavage factors such as GreA or GreB allows the resumption of elongation from the new 3'terminus. GreA releases sequences of 2 to 3 nucleotides. This Buchnera aphidicola subsp. Baizongia pistaciae (strain Bp) protein is Transcription elongation factor GreA.